We begin with the raw amino-acid sequence, 893 residues long: Phosphatidate phosphatase LPIN2 (893 aa).

The tract at residues 1–108 (MNYVGQLAGQ…LPAYLATSPI (108 aa)) is N-LIP. Position 106 is a phosphoserine (Ser-106). Residues 122–216 (LVKSSGNERP…EDYKEPSLFH (95 aa)) form a disordered region. The span at 123–151 (VKSSGNERPAQSSDVSHTLESEAVFTQSS) shows a compositional bias: polar residues. The segment covering 152 to 162 (VKKKKRRRKKC) has biased composition (basic residues). The short motif at 153-158 (KKKKRR) is the Nuclear localization signal element. Ser-174, Ser-186, and Ser-187 each carry phosphoserine. Over residues 204 to 213 (LKEEDYKEPS) the composition is skewed to basic and acidic residues. Residues Ser-243 and Ser-303 each carry the phosphoserine modification. Disordered regions lie at residues 357-400 (LLDA…PDDI) and 417-456 (FPKS…TECL). Positions 360 to 371 (ADPVPSPSAEAP) are enriched in low complexity. The span at 384–393 (KKKGVHKRSQ) shows a compositional bias: basic residues. The span at 423–445 (DPGSRQWPESDTFSGSQSPQSVG) shows a compositional bias: polar residues. Phosphoserine is present on Ser-563. Residues 568 to 611 (LPETKEGKSEVPPANDLPSNAEEPTSARPAENDTSSDEGSQELE) form a disordered region. Positions 601–611 (TSSDEGSQELE) are enriched in acidic residues. Residues 632–834 (YKKSLRLSSD…RIFTVNPKGE (203 aa)) form a C-LIP region. Residues 686–690 (DIDGT) carry the DXDXT motif motif. The short motif at 697–701 (LGQIL) is the LXXIL motif element.

This sequence belongs to the lipin family. Mg(2+) is required as a cofactor. Expressed at high level in liver and to some extend in lung, kidney, placenta, spleen, thymus, lymph node, prostate, testes, small intestine, and colon. Expressed also in circulating red blood cells and site of lymphopoiesis.

It localises to the nucleus. The protein localises to the cytoplasm. The protein resides in the cytosol. It is found in the endoplasmic reticulum membrane. The catalysed reaction is a 1,2-diacyl-sn-glycero-3-phosphate + H2O = a 1,2-diacyl-sn-glycerol + phosphate. Inhibited by N-ethylmaleimide. Functionally, acts as a magnesium-dependent phosphatidate phosphatase enzyme which catalyzes the conversion of phosphatidic acid to diacylglycerol during triglyceride, phosphatidylcholine and phosphatidylethanolamine biosynthesis in the endoplasmic reticulum membrane. Plays important roles in controlling the metabolism of fatty acids at different levels. Also acts as a nuclear transcriptional coactivator for PPARGC1A to modulate lipid metabolism. The sequence is that of Phosphatidate phosphatase LPIN2 from Mus musculus (Mouse).